Reading from the N-terminus, the 579-residue chain is UPF0324 membrane protein DVU_0943 (579 aa).

10 consecutive transmembrane segments (helical) span residues 26–45, 193–215, 225–243, 250–272, 305–327, 369–391, 430–452, 473–495, 515–533, and 546–568; these read YWAI…LFLA, AFNI…AIGM, FLVG…QMMG, YWGI…TVGT, IGIP…TFIF, LTLS…PAFI, AATI…AVYW, FPKF…GSLG, LRGW…ATNF, and LILY…YIMF.

Belongs to the UPF0324 family.

The protein localises to the cell membrane. The protein is UPF0324 membrane protein DVU_0943 of Nitratidesulfovibrio vulgaris (strain ATCC 29579 / DSM 644 / CCUG 34227 / NCIMB 8303 / VKM B-1760 / Hildenborough) (Desulfovibrio vulgaris).